Reading from the N-terminus, the 405-residue chain is 8-amino-7-oxononanoate synthase 1 (405 aa).

Arg-29 is a binding site for substrate. Gly-116–Tyr-117 lines the pyridoxal 5'-phosphate pocket. His-141 is a binding site for substrate. Pyridoxal 5'-phosphate-binding residues include Ser-187, His-215, and Thr-247. An N6-(pyridoxal phosphate)lysine modification is found at Lys-250. Thr-368 is a substrate binding site.

Belongs to the class-II pyridoxal-phosphate-dependent aminotransferase family. BioF subfamily. Homodimer. Requires pyridoxal 5'-phosphate as cofactor.

The catalysed reaction is 6-carboxyhexanoyl-[ACP] + L-alanine + H(+) = (8S)-8-amino-7-oxononanoate + holo-[ACP] + CO2. It functions in the pathway cofactor biosynthesis; biotin biosynthesis. Its function is as follows. Catalyzes the decarboxylative condensation of pimeloyl-[acyl-carrier protein] and L-alanine to produce 8-amino-7-oxononanoate (AON), [acyl-carrier protein], and carbon dioxide. The chain is 8-amino-7-oxononanoate synthase 1 from Polaromonas sp. (strain JS666 / ATCC BAA-500).